A 232-amino-acid polypeptide reads, in one-letter code: Proteasome subunit alpha (232 aa).

This sequence belongs to the peptidase T1A family. As to quaternary structure, the 20S proteasome core is composed of 14 alpha and 14 beta subunits that assemble into four stacked heptameric rings, resulting in a barrel-shaped structure. The two inner rings, each composed of seven catalytic beta subunits, are sandwiched by two outer rings, each composed of seven alpha subunits. The catalytic chamber with the active sites is on the inside of the barrel. Has a gated structure, the ends of the cylinder being occluded by the N-termini of the alpha-subunits. Is capped by the proteasome-associated ATPase, ARC.

It is found in the cytoplasm. It functions in the pathway protein degradation; proteasomal Pup-dependent pathway. Its activity is regulated as follows. The formation of the proteasomal ATPase ARC-20S proteasome complex, likely via the docking of the C-termini of ARC into the intersubunit pockets in the alpha-rings, may trigger opening of the gate for substrate entry. Interconversion between the open-gate and close-gate conformations leads to a dynamic regulation of the 20S proteasome proteolysis activity. Its function is as follows. Component of the proteasome core, a large protease complex with broad specificity involved in protein degradation. This chain is Proteasome subunit alpha, found in Acidimicrobium ferrooxidans (strain DSM 10331 / JCM 15462 / NBRC 103882 / ICP).